The sequence spans 281 residues: Large ribosomal subunit protein uL2 (281 aa).

The interval 222–281 is disordered; sequence TVRGSAMNPNDHPHGGGEGRQPIGRKSPMTPWGKRALGVKTRATKKASNQFIIRRRKETK.

Belongs to the universal ribosomal protein uL2 family. Part of the 50S ribosomal subunit. Forms a bridge to the 30S subunit in the 70S ribosome.

Functionally, one of the primary rRNA binding proteins. Required for association of the 30S and 50S subunits to form the 70S ribosome, for tRNA binding and peptide bond formation. It has been suggested to have peptidyltransferase activity; this is somewhat controversial. Makes several contacts with the 16S rRNA in the 70S ribosome. This is Large ribosomal subunit protein uL2 from Metamycoplasma hominis (strain ATCC 23114 / DSM 25592 / NBRC 14850 / NCTC 10111 / PG21) (Mycoplasma hominis).